Here is a 121-residue protein sequence, read N- to C-terminus: Large ribosomal subunit protein bL19 (121 aa).

Belongs to the bacterial ribosomal protein bL19 family.

This protein is located at the 30S-50S ribosomal subunit interface and may play a role in the structure and function of the aminoacyl-tRNA binding site. This Neisseria meningitidis serogroup C (strain 053442) protein is Large ribosomal subunit protein bL19.